We begin with the raw amino-acid sequence, 266 residues long: Apolipoprotein A-I (266 aa).

The signal sequence occupies residues 1–18 (MKAVVLTLAVLFLTGSQA). 2 repeat units span residues 67–88 (LKLL…EQIG) and 89–110 (PVTQ…QEMS). The 10 X approximate tandem repeats stretch occupies residues 67–266 (LKLLDNWDSL…DEAAKKLNAQ (200 aa)). Position 109 is a methionine sulfoxide (M109). A 3; half-length repeat occupies 111–121 (KDLEEVKQKVQ). 5 repeat units span residues 122-142 (PYLD…RQKV), 144-165 (PLGA…EKLS), 166-187 (PLGE…AQLA), 188-210 (PYSD…DGGA), and 211-231 (SLAE…EKAK). One copy of the 9; half-length repeat lies at 232–242 (PALEDLRQGLL). Repeat 10 spans residues 243 to 266 (PVLESFKVSLLAAVDEAAKKLNAQ).

The protein belongs to the apolipoprotein A1/A4/E family. Homodimer. Interacts with APOA1BP and CLU. Component of a sperm activating protein complex (SPAP), consisting of APOA1, an immunoglobulin heavy chain, an immunoglobulin light chain and albumin. Interacts with NDRG1. Interacts with SCGB3A2. Interacts with NAXE and YJEFN3. Glycosylated. Post-translationally, palmitoylated. In terms of processing, phosphorylation sites are present in the extracellular medium. As to expression, major protein of plasma HDL, also found in chylomicrons.

It is found in the secreted. Functionally, participates in the reverse transport of cholesterol from tissues to the liver for excretion by promoting cholesterol efflux from tissues and by acting as a cofactor for the lecithin cholesterol acyltransferase (LCAT). As part of the SPAP complex, activates spermatozoa motility. This Ailuropoda melanoleuca (Giant panda) protein is Apolipoprotein A-I (APOA1).